Here is a 394-residue protein sequence, read N- to C-terminus: GPI mannosyltransferase 2 (394 aa).

The next 9 membrane-spanning stretches (helical) occupy residues 2-22 (LWKL…IIYF), 47-67 (YYNV…SVYF), 104-124 (LTSI…LYYL), 132-152 (FGLV…LTGN), 185-205 (SITN…NFTV), 232-252 (IILS…TNIY), 293-313 (IPNF…LGYM), 323-343 (LLPL…FWNI), and 371-391 (YAIG…AAFL).

Belongs to the PIGV family.

It is found in the endoplasmic reticulum membrane. The protein operates within glycolipid biosynthesis; glycosylphosphatidylinositol-anchor biosynthesis. In terms of biological role, mannosyltransferase involved in glycosylphosphatidylinositol-anchor biosynthesis. Transfers the second mannose to the glycosylphosphatidylinositol during GPI precursor assembly. The sequence is that of GPI mannosyltransferase 2 (GPI18) from Candida albicans (strain SC5314 / ATCC MYA-2876) (Yeast).